Consider the following 420-residue polypeptide: Nucleobindin-2 (420 aa).

The first 24 residues, 1–24 (MRWRIIQVQYCFLLVPCMLTALEA), serve as a signal peptide directing secretion. A DNA-binding region spans residues 171–223 (RTRHEEFKKYEMMKEHERREYLKTLSEEKRKEEESKFEEMKRKHEDHPKVNHP). The interval 193-225 (KTLSEEKRKEEESKFEEMKRKHEDHPKVNHPGS) is disordered. The interval 213–420 (KHEDHPKVNH…AGELKFEPHT (208 aa)) is binds to necdin. 2 consecutive EF-hand domains span residues 241-276 (PNDF…ELEK) and 293-328 (ERLR…KEFL). The Ca(2+) site is built by Asp-254, Asn-256, Asp-258, Glu-265, Asp-306, Asn-308, Asp-310, and Glu-317. Positions 304 to 334 (EIDNNKDRLVTLEEFLRATEKKEFLEPDSWE) match the GBA motif. Ser-332 bears the Phosphoserine mark. Residues 365-389 (AEELQKQKEDLQRQHDHLEAQKQEY) are compositionally biased toward basic and acidic residues. The disordered stretch occupies residues 365–420 (AEELQKQKEDLQRQHDHLEAQKQEYHQAVQHLEQKKLQQGIAPSGPAGELKFEPHT).

This sequence belongs to the nucleobindin family. Interacts (via GBA motif) with guanine nucleotide-binding protein G(i) alpha subunit GNAI3. Preferentially interacts with inactive rather than active GNAI3. Interaction with GNAI3 is inhibited when NUCB2 binds calcium, probably due to a conformational change which renders the GBA motif inaccessible. Binds to the postmitotic growth suppressor NDN; coexpression abolishes NUCB2 secretion. Interacts with MC4R. As to expression, found in liver, heart, thymus, muscle, intestine, kidney, lung, spleen and throughout the brain, in cerebral cortex, hippocampus, hypothalamus and medulla oblongata. Nucb2 and necdin levels were higher in postmitotic neurons.

The protein resides in the cytoplasm. Its subcellular location is the perikaryon. The protein localises to the endoplasmic reticulum. It is found in the golgi apparatus. It localises to the nucleus envelope. The protein resides in the membrane. Its subcellular location is the secreted. Calcium-binding protein which may have a role in calcium homeostasis. Acts as a non-receptor guanine nucleotide exchange factor which binds to and activates guanine nucleotide-binding protein (G-protein) alpha subunit GNAI3. Its function is as follows. Anorexigenic peptide, seems to play an important role in hypothalamic pathways regulating food intake and energy homeostasis, acting in a leptin-independent manner. May also exert hypertensive roles and modulate blood pressure through directly acting on peripheral arterial resistance. In intestinal epithelial cells, plays a role in the inhibition of hepatic glucose production via MC4R receptor leading to increased cyclic adenosine monophosphate (cAMP) levels and glucagon-like peptide 1 (GLP-1) secretion. The polypeptide is Nucleobindin-2 (Nucb2) (Mus musculus (Mouse)).